The primary structure comprises 177 residues: MATNYSANQYEKAFSSKYLQNWSPTKPTKESISSHEGYTQIIANDRGHLLPSVPRSKANPWGSFMGTWQMPLKIPPARVTLTSRTTAGAASLTKWIQKNPDLLKASNGLCPEILGKPHDPDSQKKLRKKSITKTVQQARSPTIIPSSPAANLNSPDELQSSHPSAGHTPGPQRPAKS.

The disordered stretch occupies residues Ile-113–Ser-177. Residues Gly-115–Lys-124 show a composition bias toward basic and acidic residues. Over residues Thr-132–Pro-163 the composition is skewed to polar residues.

It belongs to the Flattop family. In terms of assembly, microtubule inner protein component of sperm flagellar doublet microtubules. Interacts with DLG3. As to expression, expressed in airway epithelial cells.

It is found in the cytoplasm. The protein localises to the cytoskeleton. The protein resides in the cilium basal body. Its subcellular location is the cell projection. It localises to the cilium. It is found in the apical cell membrane. The protein localises to the cilium axoneme. The protein resides in the flagellum axoneme. Its function is as follows. Microtubule inner protein (MIP) part of the dynein-decorated doublet microtubules (DMTs) in cilia axoneme. Acts as a regulator of cilium basal body docking and positioning in mono- and multiciliated cells. Regulates basal body docking and cilia formation in multiciliated lung cells. Regulates kinocilium positioning and stereocilia bundle morphogenesis in the inner ear. This is Protein Flattop from Homo sapiens (Human).